The following is a 165-amino-acid chain: Protein SprT (165 aa).

The region spanning 10–158 is the SprT-like domain; that stretch reads EACYRQAEHF…CRRCKATLVF (149 aa). His69 is a binding site for Zn(2+). The active site involves Glu70. A Zn(2+)-binding site is contributed by His73.

This sequence belongs to the SprT family. Zn(2+) serves as cofactor.

The protein resides in the cytoplasm. The protein is Protein SprT of Pseudomonas aeruginosa (strain LESB58).